The following is a 415-amino-acid chain: Maintenance of mitochondrial morphology protein 1 (415 aa).

Residues 1–18 lie on the Lumenal side of the membrane; the sequence is MADICPSRSEPTLSFTQG. The helical transmembrane segment at 19–39 threads the bilayer; it reads LILGQLSVVLLLAAFIKFFIF. The Cytoplasmic segment spans residues 40 to 415; sequence GDPPSPEVVA…MPGSMPGSMP (376 aa). Positions 114 to 330 constitute an SMP-LTD domain; the sequence is QPESLDWFNV…EPRFQEIALP (217 aa). Over residues 373–389 the composition is skewed to basic and acidic residues; sequence IEAEAHGGADRVPDSLR. A disordered region spans residues 373–415; the sequence is IEAEAHGGADRVPDSLRYRHRPRADEEFPGAGSMPGSMPGSMP. The span at 404 to 415 shows a compositional bias: low complexity; the sequence is GSMPGSMPGSMP.

The protein belongs to the MMM1 family. Homodimer. Component of the ER-mitochondria encounter structure (ERMES) or MDM complex, composed of mmm-1, mdm10, mdm12 and mdm34. A mmm-1 homodimer associates with one molecule of mdm12 on each side in a pairwise head-to-tail manner, and the SMP-LTD domains of mmm-1 and mdm12 generate a continuous hydrophobic tunnel for phospholipid trafficking.

The protein resides in the endoplasmic reticulum membrane. Functionally, component of the ERMES/MDM complex, which serves as a molecular tether to connect the endoplasmic reticulum (ER) and mitochondria. Components of this complex are involved in the control of mitochondrial shape and protein biogenesis, and function in nonvesicular lipid trafficking between the ER and mitochondria. The mdm12-mmm-1 subcomplex functions in the major beta-barrel assembly pathway that is responsible for biogenesis of all outer membrane beta-barrel proteins, and acts in a late step after the SAM complex. The mdm10-mdm12-mmm-1 subcomplex further acts in the TOM40-specific pathway after the action of the mdm12-mmm-1 complex. Essential for establishing and maintaining the structure of mitochondria and maintenance of mtDNA nucleoids. The sequence is that of Maintenance of mitochondrial morphology protein 1 (mmm-1) from Neurospora crassa (strain ATCC 24698 / 74-OR23-1A / CBS 708.71 / DSM 1257 / FGSC 987).